Consider the following 177-residue polypeptide: Large ribosomal subunit protein uL6 (177 aa).

The protein belongs to the universal ribosomal protein uL6 family. Part of the 50S ribosomal subunit.

Its function is as follows. This protein binds to the 23S rRNA, and is important in its secondary structure. It is located near the subunit interface in the base of the L7/L12 stalk, and near the tRNA binding site of the peptidyltransferase center. The polypeptide is Large ribosomal subunit protein uL6 (Bordetella bronchiseptica (strain ATCC BAA-588 / NCTC 13252 / RB50) (Alcaligenes bronchisepticus)).